Reading from the N-terminus, the 212-residue chain is ATP-dependent Clp protease proteolytic subunit (212 aa).

Catalysis depends on Ser106, which acts as the Nucleophile. The active site involves His131.

The protein belongs to the peptidase S14 family. Fourteen ClpP subunits assemble into 2 heptameric rings which stack back to back to give a disk-like structure with a central cavity, resembling the structure of eukaryotic proteasomes.

Its subcellular location is the cytoplasm. The enzyme catalyses Hydrolysis of proteins to small peptides in the presence of ATP and magnesium. alpha-casein is the usual test substrate. In the absence of ATP, only oligopeptides shorter than five residues are hydrolyzed (such as succinyl-Leu-Tyr-|-NHMec, and Leu-Tyr-Leu-|-Tyr-Trp, in which cleavage of the -Tyr-|-Leu- and -Tyr-|-Trp bonds also occurs).. Cleaves peptides in various proteins in a process that requires ATP hydrolysis. Has a chymotrypsin-like activity. Plays a major role in the degradation of misfolded proteins. The protein is ATP-dependent Clp protease proteolytic subunit of Rhodopseudomonas palustris (strain HaA2).